A 172-amino-acid polypeptide reads, in one-letter code: Adenine phosphoribosyltransferase (172 aa).

This sequence belongs to the purine/pyrimidine phosphoribosyltransferase family. In terms of assembly, homodimer.

Its subcellular location is the cytoplasm. It carries out the reaction AMP + diphosphate = 5-phospho-alpha-D-ribose 1-diphosphate + adenine. The protein operates within purine metabolism; AMP biosynthesis via salvage pathway; AMP from adenine: step 1/1. In terms of biological role, catalyzes a salvage reaction resulting in the formation of AMP, that is energically less costly than de novo synthesis. The polypeptide is Adenine phosphoribosyltransferase (Prochlorococcus marinus (strain MIT 9303)).